We begin with the raw amino-acid sequence, 375 residues long: Acetylornithine aminotransferase (375 aa).

Residues 93–94 (GT) and F120 each bind pyridoxal 5'-phosphate. R123 lines the N(2)-acetyl-L-ornithine pocket. Residue 205–208 (DEVQ) coordinates pyridoxal 5'-phosphate. K234 is subject to N6-(pyridoxal phosphate)lysine. N(2)-acetyl-L-ornithine is bound at residue T262. Position 263 (T263) interacts with pyridoxal 5'-phosphate.

This sequence belongs to the class-III pyridoxal-phosphate-dependent aminotransferase family. ArgD subfamily. As to quaternary structure, homodimer. Pyridoxal 5'-phosphate serves as cofactor.

It is found in the cytoplasm. The enzyme catalyses N(2)-acetyl-L-ornithine + 2-oxoglutarate = N-acetyl-L-glutamate 5-semialdehyde + L-glutamate. Its pathway is amino-acid biosynthesis; L-arginine biosynthesis; N(2)-acetyl-L-ornithine from L-glutamate: step 4/4. The chain is Acetylornithine aminotransferase from Staphylococcus epidermidis (strain ATCC 35984 / DSM 28319 / BCRC 17069 / CCUG 31568 / BM 3577 / RP62A).